Consider the following 481-residue polypeptide: 4-O-methyl-glucuronoyl methylesterase (481 aa).

The N-terminal stretch at 1–21 (MVSQTVVSSLLVVLGAAGVRA) is a signal peptide. The region spanning 23–59 (QRQSLWGQCGGSGWSGPTLCVDGAWCNPQNQWYHQCI) is the CBM1 domain. 3 disulfide bridges follow: Cys108-Cys143, Cys292-Cys428, and Cys324-Cys400. The GXSYXG catalytic site motif motif lies at 291-296 (GCSRNG). Ser293 serves as the catalytic Nucleophile. Lys297, Gln339, Glu347, and Trp391 together coordinate substrate. Residue His427 is the Proton donor/acceptor of the active site.

The protein belongs to the carbohydrate esterase 15 (CE15) family.

The protein resides in the secreted. The catalysed reaction is a 4-O-methyl-alpha-D-glucuronosyl ester derivative + H2O = 4-O-methyl-alpha-D-glucuronate derivative + an alcohol + H(+). In terms of biological role, glucuronoyl esterase which may play a significant role in biomass degradation, as it is considered to disconnect hemicellulose from lignin through the hydrolysis of the ester bond between 4-O-methyl-D-glucuronic acid residues of glucuronoxylans and aromatic alcohols of lignin. The polypeptide is 4-O-methyl-glucuronoyl methylesterase (Podospora anserina (strain S / ATCC MYA-4624 / DSM 980 / FGSC 10383) (Pleurage anserina)).